Reading from the N-terminus, the 227-residue chain is 2,3-bisphosphoglycerate-dependent phosphoglycerate mutase (227 aa).

Substrate-binding positions include 8 to 15 (RHGQSIWN), 21 to 22 (TG), Arg58, 110 to 113 (ERYY), Lys121, 137 to 138 (RR), and 181 to 182 (GN). His9 acts as the Tele-phosphohistidine intermediate in catalysis. The active-site Proton donor/acceptor is Glu110.

Belongs to the phosphoglycerate mutase family. BPG-dependent PGAM subfamily. As to quaternary structure, homodimer.

It catalyses the reaction (2R)-2-phosphoglycerate = (2R)-3-phosphoglycerate. It participates in carbohydrate degradation; glycolysis; pyruvate from D-glyceraldehyde 3-phosphate: step 3/5. In terms of biological role, catalyzes the interconversion of 2-phosphoglycerate and 3-phosphoglycerate. The polypeptide is 2,3-bisphosphoglycerate-dependent phosphoglycerate mutase (Pseudoalteromonas atlantica (strain T6c / ATCC BAA-1087)).